The sequence spans 220 residues: Ribonuclease HII (220 aa).

One can recognise an RNase H type-2 domain in the interval 1 to 219; the sequence is MMIAGIDEAG…VENIREELKK (219 aa). Asp7, Glu8, and Asp105 together coordinate a divalent metal cation.

Belongs to the RNase HII family. It depends on Mn(2+) as a cofactor. The cofactor is Mg(2+).

The protein localises to the cytoplasm. It catalyses the reaction Endonucleolytic cleavage to 5'-phosphomonoester.. In terms of biological role, endonuclease that specifically degrades the RNA of RNA-DNA hybrids. This chain is Ribonuclease HII, found in Methanosarcina mazei (strain ATCC BAA-159 / DSM 3647 / Goe1 / Go1 / JCM 11833 / OCM 88) (Methanosarcina frisia).